The sequence spans 272 residues: Pyrroline-5-carboxylate reductase 3 (272 aa).

Belongs to the pyrroline-5-carboxylate reductase family.

The protein localises to the cytoplasm. The catalysed reaction is L-proline + NADP(+) = (S)-1-pyrroline-5-carboxylate + NADPH + 2 H(+). It catalyses the reaction L-proline + NAD(+) = (S)-1-pyrroline-5-carboxylate + NADH + 2 H(+). It participates in amino-acid biosynthesis; L-proline biosynthesis; L-proline from L-glutamate 5-semialdehyde: step 1/1. In terms of biological role, catalyzes the reduction of 1-pyrroline-5-carboxylate (PCA) to L-proline. This chain is Pyrroline-5-carboxylate reductase 3 (proG), found in Bacillus subtilis (strain 168).